The chain runs to 373 residues: 4-hydroxy-3-methylbut-2-en-1-yl diphosphate synthase (flavodoxin) (373 aa).

Cys270, Cys273, Cys305, and Glu312 together coordinate [4Fe-4S] cluster.

The protein belongs to the IspG family. [4Fe-4S] cluster is required as a cofactor.

The catalysed reaction is (2E)-4-hydroxy-3-methylbut-2-enyl diphosphate + oxidized [flavodoxin] + H2O + 2 H(+) = 2-C-methyl-D-erythritol 2,4-cyclic diphosphate + reduced [flavodoxin]. Its pathway is isoprenoid biosynthesis; isopentenyl diphosphate biosynthesis via DXP pathway; isopentenyl diphosphate from 1-deoxy-D-xylulose 5-phosphate: step 5/6. Functionally, converts 2C-methyl-D-erythritol 2,4-cyclodiphosphate (ME-2,4cPP) into 1-hydroxy-2-methyl-2-(E)-butenyl 4-diphosphate. The chain is 4-hydroxy-3-methylbut-2-en-1-yl diphosphate synthase (flavodoxin) from Pectobacterium carotovorum subsp. carotovorum (strain PC1).